The sequence spans 316 residues: MSFASETKKELTNLEMKECCEKAELSALLRMNGSLSFSNRRLSIDIQTENAAIARRIYTLLKKGYDVTVELLVRKKMRLKKNNVYIVRLVEKSREILADLHIVRDDFSFIRNISQELIEKKCCKRSYLRGAFLAGGSVNNPETSSYHLEIFSLYKEHNDAICELMNGFDLNSKTLERRKGYITYLKEAEKITEFLNIIGAHNALLRFEDIRIVRDMRNSVNRLVNCETANLNKTIGAALRQIENIRYIDETVGLDILPDKLREIAQLRRDYQDVTLKELGEMVSGGKISKSGINHRLRKIDDIAEKLRAGETVAKK.

The H-T-H motif DNA-binding region spans 275-309; it reads TLKELGEMVSGGKISKSGINHRLRKIDDIAEKLRA.

This sequence belongs to the WhiA family.

In terms of biological role, involved in cell division and chromosome segregation. The chain is Probable cell division protein WhiA from Bacillus anthracis (strain CDC 684 / NRRL 3495).